The primary structure comprises 220 residues: Antistasin (220 aa).

A signal peptide spans 1–19 (MNYLFVFLALSAAVTFANA). Antistasin-like domains are found at residues 21–46 (CNKI…ICKC), 54–79 (CSNR…ICRC), 91–117 (CDGL…KCEC), 120–145 (CKQF…TCKC), 154–180 (CDDL…KCEC), and 183–208 (CKNF…TCKC).

The protein belongs to the protease inhibitor I15 (antistasin) family. In terms of tissue distribution, gland cells. It is more strongly expressed in the head than in the gastric tissue.

It is found in the secreted. Functionally, this highly disulfide-bonded protein is a potent inhibitor of factor Xa. Facilitates digestion of tissues and may also protect the gastric tissues from its own digestive enzymes. May have therapeutic utility as an anticoagulant. Also exhibits a strong metastatic activity. The chain is Antistasin from Hydra vulgaris (Hydra).